The primary structure comprises 1172 residues: Short transient receptor potential channel 2 (1172 aa).

The segment covering 1–10 (MLMSRTDSKS) has biased composition (basic and acidic residues). Disordered stretches follow at residues 1 to 22 (MLMS…MFKD), 69 to 98 (VVDP…WLTN), 140 to 227 (SAAR…GGVQ), and 249 to 271 (ATCG…SESV). At 1–659 (MLMSRTDSKS…PKSQLGRLLK (659 aa)) the chain is on the cytoplasmic side. The span at 75–87 (PGSSGLNQNSTDV) shows a compositional bias: polar residues. Residues 166–177 (ESAEPRAEEPNR) are compositionally biased toward basic and acidic residues. Over residues 195–204 (SLSNSSSQPN) the composition is skewed to polar residues. Residues 206-218 (RTGRTRQRQHRPQ) are compositionally biased toward basic residues. Residues 261–270 (SPASLSSSES) are compositionally biased toward low complexity. ANK repeat units follow at residues 301–330 (KFPP…DASG), 377–406 (QIHE…REKG), and 430–459 (PGVT…TIAR). The helical transmembrane segment at 660-680 (IPVLKFLLHSASYLWFLIFLL) threads the bilayer. The Extracellular portion of the chain corresponds to 681-702 (GESLVMETQLSTFKGRSQSVWE). The helical transmembrane segment at 703–723 (TSLHMIWVTGFLWFECKEVWI) threads the bilayer. The Cytoplasmic portion of the chain corresponds to 724 to 738 (EGLRSYLLDWWNFLD). Residues 739–759 (VVILSLYLASFALRLLLAGLA) form a helical membrane-spanning segment. The Extracellular portion of the chain corresponds to 760–789 (YMHCRDASDSTTCRYFTTAERSEWRTEDPQ). The chain crosses the membrane as a helical span at residues 790-810 (FLAEVLFAVTSMLSFTRLAYI). The Cytoplasmic segment spans residues 811-833 (LPAHESLGTLQISIGKMIDDMIR). The chain crosses the membrane as a helical span at residues 834 to 854 (FMFILMIILTAFLCGLNNIYV). Residues 855 to 899 (PYQESEKLGNFNETFQFLFWTMFGMEEHTVVDMPQFLVPEFVGRA) are Extracellular-facing. A helical membrane pass occupies residues 900–920 (MYGIFTIVMVIVLLNMLIAMI). Residues 921–1172 (TNSFQKIEDD…EGDLETKGES (252 aa)) lie on the Cytoplasmic side of the membrane. Residues 1118-1172 (VSLGDGLDGTGEAGAPAPGEPGSSSSAHVLVHREQEAEGSGDLLLEGDLETKGES) are disordered. Over residues 1130-1144 (AGAPAPGEPGSSSSA) the composition is skewed to low complexity.

The protein belongs to the transient receptor (TC 1.A.4) family. STrpC subfamily. TRPC2 sub-subfamily. Isoform 3 is ubiquitously expressed at low levels. Isoform 4 is expressed exclusively in vomeronasal organ.

It is found in the membrane. In terms of biological role, thought to form a receptor-activated non-selective calcium permeant cation channel. Probably is operated by a phosphatidylinositol second messenger system activated by receptor tyrosine kinases or G-protein coupled receptors. May also be activated by intracellular calcium store depletion. Plays a role in mediating responsivity to pheromones that elicit aggressive and mating behaviors. Required for response to the Esp1 pheromone which enhances female sexual receptive behavior and to the Esp22 pheromone which inhibits adult male mating behavior. This Mus musculus (Mouse) protein is Short transient receptor potential channel 2 (Trpc2).